The primary structure comprises 252 residues: MGQKTNPNGLRLGIIRTWESQWCVNDKEIPNLIKEDFLIRKLINNFAKKSAISQIDIERLKEKNKNRITISVHTAKPGVIIGKDGDTRNKLVAKLKELTQKDVNLNVLEVKNSDKVALLIAQNMAEKLENRMFFRRVQKMAIQKAIKAGAKGVKTLISGRLGGAEIARSEGHAEGRVPLHTLRADIDYAAVEAHTTYGVLGIKVWIFHGEVLPGQTILDTRKLFASQSSNNPNRRPRNFKGGNNNHVNAKKN.

A KH type-2 domain is found at 39–111 (IRKLINNFAK…DVNLNVLEVK (73 aa)). The interval 226–252 (SQSSNNPNRRPRNFKGGNNNHVNAKKN) is disordered.

This sequence belongs to the universal ribosomal protein uS3 family. In terms of assembly, part of the 30S ribosomal subunit. Forms a tight complex with proteins S10 and S14.

In terms of biological role, binds the lower part of the 30S subunit head. Binds mRNA in the 70S ribosome, positioning it for translation. The sequence is that of Small ribosomal subunit protein uS3 from Aster yellows witches'-broom phytoplasma (strain AYWB).